The chain runs to 252 residues: Endonuclease NucS (252 aa).

This sequence belongs to the NucS endonuclease family.

Its subcellular location is the cytoplasm. Functionally, cleaves both 3' and 5' ssDNA extremities of branched DNA structures. In Sulfurisphaera tokodaii (strain DSM 16993 / JCM 10545 / NBRC 100140 / 7) (Sulfolobus tokodaii), this protein is Endonuclease NucS.